A 321-amino-acid chain; its full sequence is tRNA U34 carboxymethyltransferase (321 aa).

Carboxy-S-adenosyl-L-methionine-binding positions include K90, W104, K109, G129, 151-153 (DPT), 180-181 (IE), M195, Y199, and R314.

The protein belongs to the class I-like SAM-binding methyltransferase superfamily. CmoB family. Homotetramer.

The enzyme catalyses carboxy-S-adenosyl-L-methionine + 5-hydroxyuridine(34) in tRNA = 5-carboxymethoxyuridine(34) in tRNA + S-adenosyl-L-homocysteine + H(+). In terms of biological role, catalyzes carboxymethyl transfer from carboxy-S-adenosyl-L-methionine (Cx-SAM) to 5-hydroxyuridine (ho5U) to form 5-carboxymethoxyuridine (cmo5U) at position 34 in tRNAs. The chain is tRNA U34 carboxymethyltransferase from Haemophilus influenzae (strain ATCC 51907 / DSM 11121 / KW20 / Rd).